Consider the following 297-residue polypeptide: Ribosomal RNA small subunit methyltransferase H (297 aa).

S-adenosyl-L-methionine-binding positions include Gly30–Tyr32, Asp48, Phe75, Asp96, and Gln103.

The protein belongs to the methyltransferase superfamily. RsmH family.

It is found in the cytoplasm. It carries out the reaction cytidine(1402) in 16S rRNA + S-adenosyl-L-methionine = N(4)-methylcytidine(1402) in 16S rRNA + S-adenosyl-L-homocysteine + H(+). Functionally, specifically methylates the N4 position of cytidine in position 1402 (C1402) of 16S rRNA. The sequence is that of Ribosomal RNA small subunit methyltransferase H from Ehrlichia chaffeensis (strain ATCC CRL-10679 / Arkansas).